The primary structure comprises 380 residues: 4-hydroxy-3-methylbut-2-en-1-yl diphosphate synthase (flavodoxin) (380 aa).

Residues cysteine 275, cysteine 278, cysteine 310, and glutamate 317 each coordinate [4Fe-4S] cluster.

Belongs to the IspG family. The cofactor is [4Fe-4S] cluster.

It catalyses the reaction (2E)-4-hydroxy-3-methylbut-2-enyl diphosphate + oxidized [flavodoxin] + H2O + 2 H(+) = 2-C-methyl-D-erythritol 2,4-cyclic diphosphate + reduced [flavodoxin]. It functions in the pathway isoprenoid biosynthesis; isopentenyl diphosphate biosynthesis via DXP pathway; isopentenyl diphosphate from 1-deoxy-D-xylulose 5-phosphate: step 5/6. Its function is as follows. Converts 2C-methyl-D-erythritol 2,4-cyclodiphosphate (ME-2,4cPP) into 1-hydroxy-2-methyl-2-(E)-butenyl 4-diphosphate. The chain is 4-hydroxy-3-methylbut-2-en-1-yl diphosphate synthase (flavodoxin) from Hyphomonas neptunium (strain ATCC 15444).